The sequence spans 623 residues: Pyranose 2-oxidase (623 aa).

Residues 1-28 form the signal peptide; the sequence is MSTSSSDPFFNFAKSSFRSAAAQKASAS. A propeptide spanning residues 29 to 38 is cleaved from the precursor; the sequence is SLPPLPGPDK. Position 167 is a tele-8alpha-FAD histidine (H167). Positions 448 and 450 each coordinate substrate. H548 functions as the Proton acceptor in the catalytic mechanism. N593 is a catalytic residue.

Belongs to the GMC oxidoreductase family. As to quaternary structure, homotetramer. The cofactor is FAD.

The protein resides in the periplasm. The catalysed reaction is D-glucose + O2 = 2-dehydro-D-glucose + H2O2. Catalyzes the oxidation of various aldopyranoses and disaccharides on carbon-2 to the corresponding 2-keto sugars concomitant with the reduction of O(2) to H(2)O(2). Plays an important role in lignin degradation of wood rot fungi by supplying the essential cosubstrate H(2)O(2) for the ligninolytic peroxidases, lignin peroxidase and manganese-dependent peroxidase. The chain is Pyranose 2-oxidase (p2ox) from Peniophora sp. (strain SG) (White-rot fungus).